Here is a 71-residue protein sequence, read N- to C-terminus: Guanine nucleotide-binding protein G(I)/G(S)/G(O) subunit gamma-2 (71 aa).

A2 carries the N-acetylalanine modification. C68 is subject to Cysteine methyl ester. A lipid anchor (S-geranylgeranyl cysteine) is attached at C68. A propeptide spans 69-71 (AIL) (removed in mature form).

It belongs to the G protein gamma family. As to quaternary structure, g proteins are composed of 3 units, alpha, beta and gamma. In this context, interacts with GNB2. The heterodimer formed by GNB1 and GNG2 interacts with ARHGEF5. The heterodimer formed by GNB1 and GNG2 interacts with GRK2. Component of the TAS2R14-GNAI1 complex, consisting of TAS2R14, GNAI1, GNB1 and GNG2. Forms complexes with TAS2R14 and G-proteins; these complexes play a role in the perception of bitterness. Component of the TAS2R14-GNAT3 complex, consisting of TAS2R14, GNAT3, GNB1 and GNG2. Component of the TAS2R14-GNAS2 complex, consisting of TAS2R14, GNAS2, GNB1 and GNG2. In terms of tissue distribution, adrenal gland and brain.

The protein resides in the cell membrane. Functionally, guanine nucleotide-binding proteins (G proteins) are involved as a modulator or transducer in various transmembrane signaling systems. The beta and gamma chains are required for the GTPase activity, for replacement of GDP by GTP, and for G protein-effector interaction. The sequence is that of Guanine nucleotide-binding protein G(I)/G(S)/G(O) subunit gamma-2 (GNG2) from Bos taurus (Bovine).